The primary structure comprises 118 residues: Large ribosomal subunit protein uL22c (118 aa).

It belongs to the universal ribosomal protein uL22 family. As to quaternary structure, part of the 50S ribosomal subunit.

Its subcellular location is the plastid. It localises to the chloroplast. In terms of biological role, this protein binds specifically to 23S rRNA. Its function is as follows. The globular domain of the protein is located near the polypeptide exit tunnel on the outside of the subunit, while an extended beta-hairpin is found that lines the wall of the exit tunnel in the center of the 70S ribosome. This chain is Large ribosomal subunit protein uL22c (rpl22), found in Rhodomonas salina (Cryptomonas salina).